A 290-amino-acid chain; its full sequence is uncharacterized protein (290 aa).

One can recognise an HTH lysR-type domain in the interval 1-61 (MVMNMNHLHI…RDKHHGLMLT (61 aa)). Positions 20–39 (ITEAAKELFISQPAVSKAIK) form a DNA-binding region, H-T-H motif.

The protein belongs to the LysR transcriptional regulatory family.

This is an uncharacterized protein from Bacillus subtilis (strain 168).